The sequence spans 350 residues: 2-oxoisovalerate dehydrogenase subunit beta (350 aa).

As to quaternary structure, heterodimer of an alpha and a beta chain. Thiamine diphosphate serves as cofactor.

It catalyses the reaction N(6)-[(R)-lipoyl]-L-lysyl-[protein] + 3-methyl-2-oxobutanoate + H(+) = N(6)-[(R)-S(8)-2-methylpropanoyldihydrolipoyl]-L-lysyl-[protein] + CO2. Its function is as follows. The branched-chain alpha-keto dehydrogenase complex catalyzes the overall conversion of alpha-keto acids to acyl-CoA and CO(2). It contains multiple copies of three enzymatic components: branched-chain alpha-keto acid decarboxylase (E1), lipoamide acyltransferase (E2) and lipoamide dehydrogenase (E3). In Pseudomonas aeruginosa (strain ATCC 15692 / DSM 22644 / CIP 104116 / JCM 14847 / LMG 12228 / 1C / PRS 101 / PAO1), this protein is 2-oxoisovalerate dehydrogenase subunit beta (bkdA2).